The sequence spans 161 residues: Phosphopantetheine adenylyltransferase (161 aa).

Substrate is bound at residue Ser-10. Residues 10-11 and His-18 contribute to the ATP site; that span reads SF. Substrate contacts are provided by Lys-42, Ala-75, and Arg-89. ATP is bound by residues 90 to 92, Glu-100, and 125 to 131; these read GLR and LSPISSS.

It belongs to the bacterial CoaD family. Homohexamer. The cofactor is Mg(2+).

Its subcellular location is the cytoplasm. It catalyses the reaction (R)-4'-phosphopantetheine + ATP + H(+) = 3'-dephospho-CoA + diphosphate. It functions in the pathway cofactor biosynthesis; coenzyme A biosynthesis; CoA from (R)-pantothenate: step 4/5. In terms of biological role, reversibly transfers an adenylyl group from ATP to 4'-phosphopantetheine, yielding dephospho-CoA (dPCoA) and pyrophosphate. The sequence is that of Phosphopantetheine adenylyltransferase from Streptococcus agalactiae serotype III (strain NEM316).